The sequence spans 143 residues: Histone H2B (143 aa).

Residues 1-52 are disordered; that stretch reads MAPKPASTAGKAPASTASKAPVKSDAAKTASKSKVSSGADGEKKKRKKTRKE. Lys-11 is modified (N6-acetyllysine; alternate). Lys-11 is covalently cross-linked (Glycyl lysine isopeptide (Lys-Gly) (interchain with G-Cter in SUMO); alternate). A Phosphoserine modification is found at Ser-15. Lys-19 is subject to N6-acetyllysine. A compositionally biased stretch (low complexity) spans 23–39; that stretch reads KSDAAKTASKSKVSSGA. Lys-137 is covalently cross-linked (Glycyl lysine isopeptide (Lys-Gly) (interchain with G-Cter in ubiquitin)).

The protein belongs to the histone H2B family. As to quaternary structure, the nucleosome is a histone octamer containing two molecules each of H2A, H2B, H3 and H4 assembled in one H3-H4 heterotetramer and two H2A-H2B heterodimers. The octamer wraps approximately 147 bp of DNA. Monoubiquitinated to form H2BK123ub1. H2BK123ub1 gives a specific tag for epigenetic transcriptional activation and is also prerequisite for H3K4me and H3K79me formation. H2BK123ub1 also modulates the formation of double-strand breaks during meiosis and is a prerequisite for DNA-damage checkpoint activation. In terms of processing, phosphorylated to form H2BS10ph during progression through meiotic prophase. May be correlated with chromosome condensation. Post-translationally, acetylation of N-terminal lysines and particularly formation of H2BK11ac has a positive effect on transcription. Sumoylation to form H2BK6su occurs preferentially near the telomeres and represses gene transcription.

It is found in the nucleus. Its subcellular location is the chromosome. Functionally, core component of nucleosome. Nucleosomes wrap and compact DNA into chromatin, limiting DNA accessibility to the cellular machineries which require DNA as a template. Histones thereby play a central role in transcription regulation, DNA repair, DNA replication and chromosomal stability. DNA accessibility is regulated via a complex set of post-translational modifications of histones, also called histone code, and nucleosome remodeling. The chain is Histone H2B (htbA) from Agaricus bisporus (White button mushroom).